A 195-amino-acid chain; its full sequence is MYRIVLGKVSTLSAAPLPPGLREQAPQGPRRERWLAGRALLSHTLSPLPEIIYGEQGKPAFAPETPLWFNLSHSGDDIALLLSDEGEVGCDIEVIRPRANWRWLANAVFSLGEHAEMDAVHPDQQLEMFWRIWTRKEAIVKQRGGSAWQIVSVDSTYHSSLSVSHCQLENLSLAICTPTPFTLTADSVQWIDSVN.

Belongs to the P-Pant transferase superfamily. Gsp/Sfp/HetI/AcpT family.

The enzyme catalyses apo-[ACP] + CoA = holo-[ACP] + adenosine 3',5'-bisphosphate + H(+). Functionally, may be involved in an alternative pathway for phosphopantetheinyl transfer and holo-ACP synthesis in E.coli. The native apo-protein substrate is unknown. Is able to functionally replace AcpS in vivo but only when expressed at high levels. The protein is 4'-phosphopantetheinyl transferase AcpT (acpT) of Escherichia coli O157:H7.